The sequence spans 101 residues: ATP-dependent Clp protease adapter protein ClpS (101 aa).

The segment at 1 to 24 is disordered; it reads MVVASAPAKPGSVGQQESASRDAT. The span at 13–23 shows a compositional bias: polar residues; the sequence is VGQQESASRDA.

Belongs to the ClpS family. As to quaternary structure, binds to the N-terminal domain of the chaperone ClpA.

Functionally, involved in the modulation of the specificity of the ClpAP-mediated ATP-dependent protein degradation. This Mycobacterium marinum (strain ATCC BAA-535 / M) protein is ATP-dependent Clp protease adapter protein ClpS.